Reading from the N-terminus, the 702-residue chain is Dynein axonemal intermediate chain 1 (702 aa).

The disordered stretch occupies residues 1-58 (MLPASSKMPHKQPPPPRKQSISMGRGARKRDEDSGTEVGEGTDEWVQSKATVKPPDQL). Phosphoserine is present on residues S134 and S137. WD repeat units follow at residues 383–423 (SSES…SQPS), 432–475 (KHTD…LVHT), 540–580 (AHNM…PMFI), 582–622 (DLNS…YEAI), and 630–669 (KKKN…RKMP).

This sequence belongs to the dynein intermediate chain family. As to quaternary structure, consists of at least two heavy chains and a number of intermediate and light chains. Interacts with BICD2. Interacts with CFAP45 and CFAP52. Interacts with CFAP53.

The protein localises to the cytoplasm. Its subcellular location is the cytoskeleton. It is found in the cilium axoneme. Functionally, part of the dynein complex of respiratory cilia. The protein is Dynein axonemal intermediate chain 1 (DNAI1) of Bos taurus (Bovine).